The following is a 526-amino-acid chain: Tyrosine-protein kinase transforming protein Src (526 aa).

A compositionally biased stretch (basic residues) spans 1-15 (MGSSKSKPKGPSQRR). Positions 1–59 (MGSSKSKPKGPSQRRRSLEPPDSTHHGGFPASQTPNKTAAPDTHRTPSRSFGTVATEPK) are disordered. G2 is lipidated: N-myristoyl glycine; by host. Over residues 16 to 25 (RSLEPPDSTH) the composition is skewed to basic and acidic residues. Residues 81 to 142 (GGVTTFVALY…PSNYVAPSDS (62 aa)) enclose the SH3 domain. Positions 148–245 (WYFGKITRRE…GLCHRLTNVC (98 aa)) constitute an SH2 domain. The region spanning 267–517 (LRLEVKLGQG…TFEYLQAQLL (251 aa)) is the Protein kinase domain. ATP-binding positions include 273–281 (LGQGCFGEV) and K295. D386 acts as the Proton acceptor in catalysis. At Y416 the chain carries Phosphotyrosine; by autocatalysis.

This sequence belongs to the protein kinase superfamily. Tyr protein kinase family. SRC subfamily. As to quaternary structure, homodimer. Post-translationally, the phosphorylated form is termed pp60v-src.

The enzyme catalyses L-tyrosyl-[protein] + ATP = O-phospho-L-tyrosyl-[protein] + ADP + H(+). This phosphoprotein, required for both the initiation and the maintenance of neoplastic transformation, is a protein kinase that catalyzes the phosphorylation of tyrosine residues in vitro. This Rous sarcoma virus subgroup E (strain Schmidt-Ruppin) (RSV-SR-E) protein is Tyrosine-protein kinase transforming protein Src (V-SRC).